The chain runs to 692 residues: Elongation factor G (692 aa).

Positions 8-282 (ENTRNIGIMA…GVVDYLPSPV (275 aa)) constitute a tr-type G domain. GTP contacts are provided by residues 17 to 24 (AHIDAGKT), 81 to 85 (DTPGH), and 135 to 138 (NKMD).

The protein belongs to the TRAFAC class translation factor GTPase superfamily. Classic translation factor GTPase family. EF-G/EF-2 subfamily.

The protein localises to the cytoplasm. Functionally, catalyzes the GTP-dependent ribosomal translocation step during translation elongation. During this step, the ribosome changes from the pre-translocational (PRE) to the post-translocational (POST) state as the newly formed A-site-bound peptidyl-tRNA and P-site-bound deacylated tRNA move to the P and E sites, respectively. Catalyzes the coordinated movement of the two tRNA molecules, the mRNA and conformational changes in the ribosome. The sequence is that of Elongation factor G from Geobacillus sp. (strain WCH70).